The primary structure comprises 407 residues: Imidazolonepropionase (407 aa).

Fe(3+) contacts are provided by H68 and H70. Zn(2+) contacts are provided by H68 and H70. Residues R77, Y140, and H173 each contribute to the 4-imidazolone-5-propanoate site. Y140 contacts N-formimidoyl-L-glutamate. H238 is a binding site for Fe(3+). H238 provides a ligand contact to Zn(2+). Q241 contributes to the 4-imidazolone-5-propanoate binding site. D313 is a Fe(3+) binding site. D313 is a binding site for Zn(2+). N-formimidoyl-L-glutamate-binding residues include N315 and G317. Residue T318 participates in 4-imidazolone-5-propanoate binding.

Belongs to the metallo-dependent hydrolases superfamily. HutI family. Zn(2+) is required as a cofactor. The cofactor is Fe(3+).

The protein resides in the cytoplasm. The enzyme catalyses 4-imidazolone-5-propanoate + H2O = N-formimidoyl-L-glutamate. Its pathway is amino-acid degradation; L-histidine degradation into L-glutamate; N-formimidoyl-L-glutamate from L-histidine: step 3/3. In terms of biological role, catalyzes the hydrolytic cleavage of the carbon-nitrogen bond in imidazolone-5-propanoate to yield N-formimidoyl-L-glutamate. It is the third step in the universal histidine degradation pathway. The sequence is that of Imidazolonepropionase from Burkholderia lata (strain ATCC 17760 / DSM 23089 / LMG 22485 / NCIMB 9086 / R18194 / 383).